A 588-amino-acid polypeptide reads, in one-letter code: Outer membrane transporter CdiB (588 aa).

A helical membrane pass occupies residues 33–55; the sequence is VVRYFSLLPCLCILSFSSPAAML. Residues 104–179 form the POTRA domain; the sequence is FTVSRIVVSG…GVLHITVMEG (76 aa).

This sequence belongs to the TPS (TC 1.B.20) family.

The protein localises to the cell outer membrane. Its function is as follows. Potential outer membrane protein component of a toxin-immunity protein module, which functions as a cellular contact-dependent growth inhibition (CDI) system. CDI modules allow bacteria to communicate with and inhibit the growth of closely related neighboring bacteria in a contact-dependent fashion. This protein may be required for secretion and assembly of the CdiA toxin protein. Probable member of a two partner secretion pathway (TPS) in which it mediates the secretion of CdiA. This chain is Outer membrane transporter CdiB, found in Escherichia coli O6:K15:H31 (strain 536 / UPEC).